The primary structure comprises 287 residues: Bifunctional protein FolD (287 aa).

Residues 169–171 (GRS) and serine 194 each bind NADP(+).

Belongs to the tetrahydrofolate dehydrogenase/cyclohydrolase family. As to quaternary structure, homodimer.

It catalyses the reaction (6R)-5,10-methylene-5,6,7,8-tetrahydrofolate + NADP(+) = (6R)-5,10-methenyltetrahydrofolate + NADPH. It carries out the reaction (6R)-5,10-methenyltetrahydrofolate + H2O = (6R)-10-formyltetrahydrofolate + H(+). Its pathway is one-carbon metabolism; tetrahydrofolate interconversion. Functionally, catalyzes the oxidation of 5,10-methylenetetrahydrofolate to 5,10-methenyltetrahydrofolate and then the hydrolysis of 5,10-methenyltetrahydrofolate to 10-formyltetrahydrofolate. In Albidiferax ferrireducens (strain ATCC BAA-621 / DSM 15236 / T118) (Rhodoferax ferrireducens), this protein is Bifunctional protein FolD.